A 169-amino-acid polypeptide reads, in one-letter code: Cell division inhibitor SulA (169 aa).

The segment at 106–112 (ALRTGNY) is ftsZ binding. The interval 162 to 169 (KIHSNLYH) is lon protease binding.

It belongs to the SulA family. Interacts with FtsZ. Is rapidly cleaved and degraded by the Lon protease once DNA damage is repaired.

Its function is as follows. Component of the SOS system and an inhibitor of cell division. Accumulation of SulA causes rapid cessation of cell division and the appearance of long, non-septate filaments. In the presence of GTP, binds a polymerization-competent form of FtsZ in a 1:1 ratio, thus inhibiting FtsZ polymerization and therefore preventing it from participating in the assembly of the Z ring. This mechanism prevents the premature segregation of damaged DNA to daughter cells during cell division. This Salmonella gallinarum (strain 287/91 / NCTC 13346) protein is Cell division inhibitor SulA.